Reading from the N-terminus, the 504-residue chain is Putative arrestin-related trafficking adapter SPBC839.02 (504 aa).

A disordered region spans residues 481 to 504; the sequence is QAPPPKYDDIFQSGSSHDENHDDN.

The protein belongs to the ALY1 family.

In terms of biological role, may regulate endocytosis in response to extracellular stimuli. This Schizosaccharomyces pombe (strain 972 / ATCC 24843) (Fission yeast) protein is Putative arrestin-related trafficking adapter SPBC839.02.